The primary structure comprises 356 residues: Heat-inducible transcription repressor HrcA (356 aa).

It belongs to the HrcA family.

Negative regulator of class I heat shock genes (grpE-dnaK-dnaJ and groELS operons). Prevents heat-shock induction of these operons. The polypeptide is Heat-inducible transcription repressor HrcA (Chlorobaculum tepidum (strain ATCC 49652 / DSM 12025 / NBRC 103806 / TLS) (Chlorobium tepidum)).